The following is a 148-amino-acid chain: UPF0251 protein Cbei_2962 (148 aa).

This sequence belongs to the UPF0251 family.

The sequence is that of UPF0251 protein Cbei_2962 from Clostridium beijerinckii (strain ATCC 51743 / NCIMB 8052) (Clostridium acetobutylicum).